The sequence spans 272 residues: ATP phosphoribosyltransferase regulatory subunit (272 aa).

The protein belongs to the class-II aminoacyl-tRNA synthetase family. HisZ subfamily. In terms of assembly, heteromultimer composed of HisG and HisZ subunits.

The protein resides in the cytoplasm. The protein operates within amino-acid biosynthesis; L-histidine biosynthesis; L-histidine from 5-phospho-alpha-D-ribose 1-diphosphate: step 1/9. In terms of biological role, required for the first step of histidine biosynthesis. May allow the feedback regulation of ATP phosphoribosyltransferase activity by histidine. The sequence is that of ATP phosphoribosyltransferase regulatory subunit from Staphylococcus aureus (strain MRSA252).